A 463-amino-acid chain; its full sequence is ATP-dependent protease ATPase subunit HslU (463 aa).

ATP is bound by residues Val-21, 63 to 68, Asp-276, Glu-341, and Arg-413; that span reads GVGKTE.

This sequence belongs to the ClpX chaperone family. HslU subfamily. In terms of assembly, a double ring-shaped homohexamer of HslV is capped on each side by a ring-shaped HslU homohexamer. The assembly of the HslU/HslV complex is dependent on binding of ATP.

The protein resides in the cytoplasm. In terms of biological role, ATPase subunit of a proteasome-like degradation complex; this subunit has chaperone activity. The binding of ATP and its subsequent hydrolysis by HslU are essential for unfolding of protein substrates subsequently hydrolyzed by HslV. HslU recognizes the N-terminal part of its protein substrates and unfolds these before they are guided to HslV for hydrolysis. This Thermotoga neapolitana (strain ATCC 49049 / DSM 4359 / NBRC 107923 / NS-E) protein is ATP-dependent protease ATPase subunit HslU.